Here is a 696-residue protein sequence, read N- to C-terminus: Carotenoid dioxygenase carX (696 aa).

Positions 1–16 (MKFLQQNSFTQTSMSQ) are enriched in polar residues. The tract at residues 1–27 (MKFLQQNSFTQTSMSQPHEDVSPPLRH) is disordered. His244, His298, His361, and His642 together coordinate Fe(2+).

This sequence belongs to the carotenoid oxygenase family. It depends on Fe(2+) as a cofactor.

It carries out the reaction all-trans-beta-carotene + O2 = 2 all-trans-retinal. It participates in carotenoid biosynthesis. In terms of biological role, carotenoid dioxygenase; part of the car gene cluster that mediates the biosynthesis of neurosporaxanthin, a carboxylic apocarotenoid acting as an essential protective pigments and leading to orange pigmentation. CarX mediates the cleavage of beta-carotene produced by carAR into retinal, the rhodopsin's chromophore that is involved in the regulation of the carotenoid biosynthetic pathway via a negative feedback mechanism. It can also convert the synthetic compound beta-apo-8'-carotenal but not C35-apocarotenoids such as the acidic apocarotenoid neurosporaxanthin (C35), as well as its corresponding aldehyde beta-apo-4'-carotenal. The sequence is that of Carotenoid dioxygenase carX from Gibberella fujikuroi (strain CBS 195.34 / IMI 58289 / NRRL A-6831) (Bakanae and foot rot disease fungus).